Here is a 155-residue protein sequence, read N- to C-terminus: Ribosomal RNA large subunit methyltransferase H (155 aa).

S-adenosyl-L-methionine contacts are provided by residues L72, G104, and 123–128; that span reads LAKITL.

Belongs to the RNA methyltransferase RlmH family. As to quaternary structure, homodimer.

It is found in the cytoplasm. The catalysed reaction is pseudouridine(1915) in 23S rRNA + S-adenosyl-L-methionine = N(3)-methylpseudouridine(1915) in 23S rRNA + S-adenosyl-L-homocysteine + H(+). Specifically methylates the pseudouridine at position 1915 (m3Psi1915) in 23S rRNA. In Mycoplasma mycoides subsp. mycoides SC (strain CCUG 32753 / NCTC 10114 / PG1), this protein is Ribosomal RNA large subunit methyltransferase H.